Reading from the N-terminus, the 147-residue chain is MANLLVIHGPNLNLLGTREPKYYGSITLEAINSNLTHQAAQAGHHLTCFQANAEHILIEQIHSAAHQDIAFIIINPAAFTHTSIALRDALAAVAIPFIEVHLSNVHRREAFRRHSYFSDIAEGVISGLGPTGYELALQAVFARLLPP.

Tyr-23 functions as the Proton acceptor in the catalytic mechanism. Substrate contacts are provided by Asn-75, His-81, and Asp-88. Catalysis depends on His-101, which acts as the Proton donor. Substrate contacts are provided by residues 102-103 (LS) and Arg-112.

Belongs to the type-II 3-dehydroquinase family. As to quaternary structure, homododecamer.

The enzyme catalyses 3-dehydroquinate = 3-dehydroshikimate + H2O. Its pathway is metabolic intermediate biosynthesis; chorismate biosynthesis; chorismate from D-erythrose 4-phosphate and phosphoenolpyruvate: step 3/7. Its function is as follows. Catalyzes a trans-dehydration via an enolate intermediate. The protein is 3-dehydroquinate dehydratase of Nitrosococcus oceani (strain ATCC 19707 / BCRC 17464 / JCM 30415 / NCIMB 11848 / C-107).